Consider the following 412-residue polypeptide: Stachydrine N-demethylase (412 aa).

In terms of domain architecture, Rieske spans 45–150 (LYAVPVCQLA…LRNLDGLIYI (106 aa)). Positions 86, 88, 106, and 109 each coordinate [2Fe-2S] cluster. Fe cation contacts are provided by His204, His209, and Asp360.

Belongs to the bacterial ring-hydroxylating dioxygenase alpha subunit family. In terms of assembly, homotrimer. The system is probably composed of an oxygenase subunit (Stc2) and two reductase subunits (Stc3 and Stc4). [2Fe-2S] cluster is required as a cofactor. Fe cation serves as cofactor.

The catalysed reaction is L-proline betaine + NADH + O2 + H(+) = N-methyl-L-proline + formaldehyde + NAD(+) + H2O. It catalyses the reaction L-proline betaine + NADPH + O2 + H(+) = N-methyl-L-proline + formaldehyde + NADP(+) + H2O. Monooxygenase involved in the catabolism of stachydrine (L-proline betaine), a source of carbon and nitrogen. Part of a Rieske-type oxygenase system that catalyzes the demethylation of stachydrine to produce N-methyl-L-proline (monomethylproline). Stc2 is the catalytic subunit. The chain is Stachydrine N-demethylase from Rhizobium meliloti (strain 1021) (Ensifer meliloti).